The sequence spans 3289 residues: MHQPPVRFTYRLLSYLISTIIAGQPLLPAVGAVITPQNGAGMDKAANGVPVVNIATPDGAGISHNRFTDYNVGKEGLILNNATGKLNPTQLGGLIQNNPNLKAGGEAKGIINEVTGGNRSLLQGYTEVAGKAANVMVANPYGITCDGCGFINTPHATLTTGRPVMNADGSLQALEVTEGSITINGAGLDGTRSDAVSIIARATEVNAALHAKDLTVTAGANRITADGRVSALKGEGDVPKVAVDTGALGGMYARRIHLTSTESGVGVNLGNLYARDGDITLDASGRLTVNNSLATGAVTAKGQGVTLTGDHKAGGNLSVSSRSDIVLSNGTLNSDKDLSLTAGGRITQQNEKLTAGRDVTLAAKNITQDTASQINAARDIVTVSSDTLTTQGQITAGQNLTASATTLTQDGTLLAKGHAGLDAGTLNNSGAVQGASLTLGSTTLSNSGSLLSGGPLTVNTRDFTQSGRTGAKGKVDITASGKLTSTGSLVSDDVLVLKAQDVTQNGVLSGGKGLTVSAQALSSGKKSVTHSDAAMTLNVTTVALDGENSAGDTLRVQADKLSTAAGAQLQSGKNLSINARDARLAGTQAAQQTMAVNASEKLTHSGKSSAPSLSLSAPELTSSGVLVGSALNTQSQTLTNSGLLQGEASLTVNTQRLDNQQNGTLYSAADLTLDIPDIRNSGLITGDNGLTLNTASLSNPGKIIADTLNVRATTLDGDGLLQGAGALALAGDTLSQGRNGRWLTAGDLSLRGKTLHTAGTTQGQNLTVQADNWANSGSVLATGNLTASATGQLTSTGDIMSQGDTTLNAATTDNRGSLLSAGTLSLDGNSLDNRGTVQGNHVTIRQNSVTNSGTLTGIAALTLAARMDMASPQPALMNNGGSLLTSGDLTITAGSITSSGHWQGKQVLITADSLANSGAIQAADSLTARLTGELVSTAGSKVTSNGEMALSALNLSNSGQWIAKNLTLKANSLTSAGDITGVDALTLTVNQTLNNHASGKLLSAGVLTLKADSVKNDGQLQGNATTITAGQLTNGGHLQGETLTLTASGGVNNRSGGVLMSRNALNVSTATLSNQGTIQGGGGVSLNATDRLQNDGKILSGSNLTLTAQVLANTGSGLVQAATLLLDVVNTVNGGRVLATGSADVKGTTLNNTGTLQGADLLVNYHTFSNSGTLLGTSGLGVKGSSLLQNGTGRLYSAGNLLLDAQDFSGQGQVVATGDVTLKLIAALTNHGTLAAGKTLSVTSQNAITNGGVMQGDAMVLGAGEAFTNNGMLTAGKGNSVFSAQRLFLNAPGSLQAGGDVSLNSRSDITISGFTGTAGSLTMNVAGTLLNSALIYAGNNLKLFTDRLHNQHGDILAGNSLWVQKDASGGANTEIINTSGNIETHQGDIVVRTGHLLNQREGFSATTTTRTNPSSIQGMGNALVDIPLSLLPDGSYGYFTREVENQHGTPCNGHGACNITMDTLYYYAPFADSATQRFLSSQNITTVTGADNPAGRIASGRNLSAEAERLENRASFILANGDIALSGRELSNQSWQTGTENEYLVYRYDPKTFYGSYATGSLDKLPLLSPEFENNTIRFSLDGREKDYTPGKTYYSVIQAGGDVKTRFTSSINNGTTTAHAGSVSPVVSAPVLNTLSQQTGGDSLTQTALQQYEPVVVGSPQWHDELAGALKNIAGGSPLTGQTGISDDWPLPSGNNGYLVPSTDPDSPYLITVNPKLDGLGQVDSHLFAGLYELLGAKPGQAPRETAPSYTDEKQFLGSSYFLDRLGLKPEKDYRFLGDAVFDTRYVSNAVLSRTGSRYLNGLGSDTEQMRYLMDNAARQQKGLGLEFGVALTAEQIAQLDGSILWWESATINGQTVMVPKLYLSPEDITLHNGSVISGNNVQLAGGNITNSGGSINAQNGLSLDSTGYIDNLNAGLISAGGSLDLSAIGDISNISSVISGKTVQLESVSGNISNITRRQQWNAGSDSRYGGVHLSGTDTGPVATIKGTDSLSLDAGKNIDITGATVSSGGTLGMSAGNDINIAANLISGSKSQSGFWHTDDNSASSTTSQGSSISAGGNLAMAAGHNLDVTASSVSAGHSALLSAGNDLSLNAVRESKNSRNGRSESHESHAAVSTVTAGDNLLLVAGRDVASQAAGVAAENNVVIRGGRDVNLVAESAGAGDSYTSKKKKEINETVRQQGTEIASGGDTTVNAGRDITAVASSVTATGNISVNAGRDVALTTATESDYHYLETKKKSGGFLSKKTTHTISEDSASREAGSLLSGNRVTVNAGDNLTVEGSDVVADQDVSLAAGNHVDVLAATSTDTSWRFKETKKSGLMGTGGIGFTIGSSKTTHDRREAGTTQSQSASTIGSTAGNVSITAGKQAHISGSDVIANRDISITGDSVVVDPGHDRRTVDEKFEQKKSGLTVALSGTVGSAINNAVTSAQETKESSDSRLKALQATKTALSGVQAGQAAAMATATGDPNATGVSLSLTTQKSKSQQHSESDTVSGSTLNAGNNLSVVATGKNRGDNRGDIVIAGSQLKAGGNTSLDAANDVLLSGAANTQKTTGRNSSSGGGVGVSIGAGGNGAGISVFASVNAAKGSEKGNGTEWTETTIDSGKTVTINSGRDTVLNGAQVNGNRIIADVGHDLLISSQQDTSKYDSKQTSVAAGGSFTFGSMTGSGYIAASRDKMKSRFDSVAEQTGMFSGDGGFDITVGNHTQLDGAVIASTATADKNSLDTGTLGFSDIHNEADYKVSHSGISLSGGGSFGDKFQGNMPGGMISAGGHSGHAEGTTQAAVADGTITIRDRDNQKQNLANLSRDPAHANDSISPIFDKEKEQRRLQTVGLISDIGSQVADIARTQGELNALKAAQDKYGPVPADATEEQRQAYLAKLRDTPEYKKEQEKYGTGSEIQRGIQAATAALQGLAGGNLAGALAGASAPELAHLLKSTEKDPAVNAIAHAILGGTVAAMQGNNVAAGAAGAATGELAARAIAGMLYPGVKQSDLSEEQKQTISTLATVSAGLAGGLTGNSTASAAVGAQSGKNAVENNYLSVSEKTELEIAKQTLKNSKDPAEREKAQQKYDALLEKDIASDKEVIAACSNGNASSSACASARLKVIASKEGYEDGPYNSKYSQQYADAYGQIVNLLDITSVDAQNQQQVKNAMINYFMVTKGVDRQTAESYTETTQGLEIIAASVTPLIGQAASNKLSYLGIGKKISFDGDFYTVDGMKFSKSYYEKLWEQGRPAPFVQAREVLNSNPKIEPDPRGAPGYLRYEGAGLEMIYNPKTGQVGHIQPVKVK.

The signal sequence occupies residues 1–32 (MHQPPVRFTYRLLSYLISTIIAGQPLLPAVGA). Positions 36–322 (PQNGAGMDKA…AGGNLSVSSR (287 aa)) are two-partner system transport domain (TPS). Positions 351-1398 (EKLTAGRDVT…IVVRTGHLLN (1048 aa)) are FHA-1. The disordered stretch occupies residues 595–615 (AVNASEKLTHSGKSSAPSLSL). The receptor binding domain (RBD) stretch occupies residues 1399–1689 (QREGFSATTT…LTGQTGISDD (291 aa)). Residues 1690 to 1874 (WPLPSGNNGY…LSPEDITLHN (185 aa)) form a YP domain region. A periplasmic FHA-1 repeat (pFR) region spans residues 1875 to 1935 (GSVISGNNVQ…DLSAIGDISN (61 aa)). Positions 1979–2653 (TDTGPVATIK…TSKYDSKQTS (675 aa)) are FHA-2. Basic and acidic residues predominate over residues 2097-2113 (RESKNSRNGRSESHESH). 3 disordered regions span residues 2097 to 2116 (RESK…HAAV), 2332 to 2356 (GSSK…TIGS), and 2466 to 2513 (TGDP…TGKN). Composition is skewed to polar residues over residues 2344–2356 (GTTQ…TIGS) and 2472–2507 (TGVS…NLSV). A pretoxin (PT) domain region spans residues 2992 to 3034 (SDLSEEQKQTISTLATVSAGLAGGLTGNSTASAAVGAQSGKNA). The VENN CT cleavage motif motif lies at 3035 to 3038 (VENN). A C-terminal effector domain (CT); has tRNase activity region spans residues 3035 to 3289 (VENNYLSVSE…VGHIQPVKVK (255 aa)). An inner membrane translocation domain (IMTD), targets protein to PtsG region spans residues 3039 to 3197 (YLSVSEKTEL…PLIGQAASNK (159 aa)).

It in the N-terminal section; belongs to the CdiA toxin family. Forms a contact-dependent growth inhibition complex of CdiA-CT-NC101, CdiI-NC101 and EF-Tu; the complex is a dimer of heterotrimers. Stable CdiA-CT-NC101, EF-Tu complexes are not detected, nor are complexes with EF-Ts.

It is found in the secreted. Its subcellular location is the target cell. The protein resides in the target cell cytoplasm. Its function is as follows. Toxic component of a toxin-immunity protein module, which functions as a cellular contact-dependent growth inhibition (CDI) system. CDI modules allow bacteria to communicate with and inhibit the growth of closely related neighboring bacteria in a contact-dependent fashion (target cell counts decrease about 10,0000-fold for this system). CdiA toxicity is neutralized by its cognate immunity protein CdiI-NC101, but not by CdiI from other bacteria. The C-terminal domain (CT) cleaves tRNA endonucleolytically at the 5' side of guanine discriminator nucleotide sites (removes the last 4 nucleotides of the tRNA acceptor arm when the first nucleotide to be removed is G). Requires EF-Ts (tsf) for toxic function of the CT domain in vivo. In vitro the CT tRNase activity requires both EF-Tu (tufA) and EF-Ts. EF-Ts probably increases steady-state GTP-EF-Tu-aa-tRNA substrate levels. The CT domain is thought to remodel this same complex to displace the 3'-end of the aa-tRNA and allow it to enter into the toxin active site. The CT domain gains access to the cytoplasm of target cells by using integral inner membrane protein PTS system glucose-specific EIICB component (ptsG). In terms of biological role, the CdiA protein is thought to be exported from the cell through the central lumen of CdiB, the other half of its two-partner system (TPS). The TPS domain probably remains associated with CdiB while the FHA-1 domain forms an extended filament with the receptor-binding domain (RBD) at its extremity; in the secretion arrested state the C-terminus of the RBD and YP domains form a hairpin-like structure as the FHA-2, PT and CT domains are periplasmic. The YP domain is probably responsible for this arrest at the point where it re-enters the host cell periplasm. Upon binding to a target cell outer membrane receptor a signal is transmitted to activate secretion. The filament elongates slightly, the rest of CdiA is secreted and the FHA-2 domain becomes stably associated with the target cell's outer membrane where it facilitates entry of the toxic CT domain into the target cell periplasm. From there the toxic CT domain is cleaved and gains access to the target cell cytoplasm via an inner membrane protein (PtsG for this CDI). This is tRNA nuclease CdiA from Escherichia coli (strain NC101).